The following is a 169-amino-acid chain: MAVNISKQPTRSFSLDEVTVRNELKLSQGFVMRKDLKGPRLIVTSGMGSTFSKCSLFIFKAVMILHTCLIVKSIRIFSKKKKRNGSMHNMYYASVPFLLFSNAYSIDFSRHVNEFLEKKRCEMIIPLKLLADHTYLSEIEYVSLNADGQYSQLQDIFFIHDVFFVYFRF.

Residues 55–77 form a helical membrane-spanning segment; it reads SLFIFKAVMILHTCLIVKSIRIF.

It localises to the membrane. This is an uncharacterized protein from Saccharomyces cerevisiae (strain ATCC 204508 / S288c) (Baker's yeast).